The primary structure comprises 747 residues: Catalase-peroxidase (747 aa).

The first 27 residues, 1-27 (MRKFSVSKVALLAATMAPALLPAAARA), serve as a signal peptide directing secretion. The segment at residues 116 to 238 (WHSAGTYRTA…LAAVQMGLIY (123 aa)) is a cross-link (tryptophyl-tyrosyl-methioninium (Trp-Tyr) (with M-264)). Histidine 117 serves as the catalytic Proton acceptor. Positions 238–264 (YVNPEGPNGNPDPLLAAKDIRETFGRM) form a cross-link, tryptophyl-tyrosyl-methioninium (Tyr-Met) (with W-116). Histidine 279 is a binding site for heme b.

It belongs to the peroxidase family. Peroxidase/catalase subfamily. As to quaternary structure, homodimer or homotetramer. It depends on heme b as a cofactor. In terms of processing, formation of the three residue Trp-Tyr-Met cross-link is important for the catalase, but not the peroxidase activity of the enzyme.

It carries out the reaction H2O2 + AH2 = A + 2 H2O. The enzyme catalyses 2 H2O2 = O2 + 2 H2O. In terms of biological role, bifunctional enzyme with both catalase and broad-spectrum peroxidase activity. The sequence is that of Catalase-peroxidase from Novosphingobium aromaticivorans (strain ATCC 700278 / DSM 12444 / CCUG 56034 / CIP 105152 / NBRC 16084 / F199).